The primary structure comprises 219 residues: 7-cyano-7-deazaguanine synthase (219 aa).

Tyrosine 9–leucine 19 lines the ATP pocket. Positions 185, 193, 196, and 199 each coordinate Zn(2+).

It belongs to the QueC family. Requires Zn(2+) as cofactor.

The enzyme catalyses 7-carboxy-7-deazaguanine + NH4(+) + ATP = 7-cyano-7-deazaguanine + ADP + phosphate + H2O + H(+). It participates in purine metabolism; 7-cyano-7-deazaguanine biosynthesis. Functionally, catalyzes the ATP-dependent conversion of 7-carboxy-7-deazaguanine (CDG) to 7-cyano-7-deazaguanine (preQ(0)). This chain is 7-cyano-7-deazaguanine synthase, found in Marinomonas sp. (strain MWYL1).